A 344-amino-acid polypeptide reads, in one-letter code: Meiotic recombination protein DMC1 homolog (344 aa).

The segment at 1-22 is disordered; the sequence is MMASLKAEETSQMQLVEREEND. 133-140 provides a ligand contact to ATP; that stretch reads GEFRSGKT. R235 is a dsDNA binding site. R235, F238, R241, R247, and R315 together coordinate ssDNA. Residues R241 and R247 each contribute to the dsDNA site.

It belongs to the RecA family. DMC1 subfamily. As to quaternary structure, double stacked ring-shaped homooctamer. Interacts with BRCA2A and BRCA2B. Expressed in mitotic and/or meiotic tissues. Expressed in roots, leaves and anthers and carpels of young fower buds.

The protein localises to the nucleus. Functionally, may participate in meiotic recombination, specifically in homologous strand assimilation, which is required for the resolution of meiotic double-strand breaks. Mediates interhomolog recombination during meiosis. The chain is Meiotic recombination protein DMC1 homolog from Arabidopsis thaliana (Mouse-ear cress).